The chain runs to 469 residues: GTPase Der (469 aa).

EngA-type G domains are found at residues 3 to 166 (PVIA…PEDE) and 177 to 350 (LRLA…ESAN). GTP-binding positions include 9-16 (GRPNVGKS), 56-60 (DTGGI), 118-121 (NKVD), 183-190 (GRPNVGKS), 230-234 (DTAGV), and 295-298 (NKWD). The region spanning 351-435 (LKVSPAKLTQ…PVKIEFKTSE (85 aa)) is the KH-like domain.

Belongs to the TRAFAC class TrmE-Era-EngA-EngB-Septin-like GTPase superfamily. EngA (Der) GTPase family. In terms of assembly, associates with the 50S ribosomal subunit.

GTPase that plays an essential role in the late steps of ribosome biogenesis. This chain is GTPase Der, found in Acinetobacter baumannii (strain AB0057).